A 197-amino-acid chain; its full sequence is uncharacterized protein (197 aa).

A helical transmembrane segment spans residues 103 to 123 (LAIVLPVLANLIMCAMLAWYL).

It localises to the host membrane. This is an uncharacterized protein from Equus caballus (Horse).